A 425-amino-acid chain; its full sequence is Tyrosine--tRNA ligase (425 aa).

Residue Tyr-37 coordinates L-tyrosine. The 'HIGH' region motif lies at 42–51 (PTADSLHLGH). L-tyrosine-binding residues include Tyr-174 and Gln-178. The 'KMSKS' region motif lies at 234-238 (KFGKS). Lys-237 is a binding site for ATP. Positions 357-422 (DGLIDALAAS…RGKKLYALLV (66 aa)) constitute an S4 RNA-binding domain.

It belongs to the class-I aminoacyl-tRNA synthetase family. TyrS type 1 subfamily. Homodimer.

It localises to the cytoplasm. It catalyses the reaction tRNA(Tyr) + L-tyrosine + ATP = L-tyrosyl-tRNA(Tyr) + AMP + diphosphate + H(+). In terms of biological role, catalyzes the attachment of tyrosine to tRNA(Tyr) in a two-step reaction: tyrosine is first activated by ATP to form Tyr-AMP and then transferred to the acceptor end of tRNA(Tyr). The chain is Tyrosine--tRNA ligase from Laribacter hongkongensis (strain HLHK9).